A 142-amino-acid chain; its full sequence is Large ribosomal subunit protein bL17 (142 aa).

It belongs to the bacterial ribosomal protein bL17 family. As to quaternary structure, part of the 50S ribosomal subunit. Contacts protein L32.

The protein is Large ribosomal subunit protein bL17 of Methylocella silvestris (strain DSM 15510 / CIP 108128 / LMG 27833 / NCIMB 13906 / BL2).